Here is a 521-residue protein sequence, read N- to C-terminus: Zinc finger protein 394 (521 aa).

A disordered region spans residues 1–45; sequence MAAGSGVVPPPLGAGLCTVKVEEDSPGNQESSGSGDWQNPETSRK. Lys20 participates in a covalent cross-link: Glycyl lysine isopeptide (Lys-Gly) (interchain with G-Cter in SUMO2). Over residues 26 to 41 the composition is skewed to polar residues; it reads PGNQESSGSGDWQNPE. One can recognise an SCAN box domain in the interval 38-133; that stretch reads QNPETSRKQF…RALDRASPQG (96 aa). The region spanning 135 to 196 is the KRAB domain; the sequence is MTFKDVAESL…KQEILKEAEP (62 aa). Lys259 participates in a covalent cross-link: Glycyl lysine isopeptide (Lys-Gly) (interchain with G-Cter in SUMO2). 3 C2H2-type zinc fingers span residues 327-349, 355-377, and 383-405; these read YKCD…QRIH, YQCQ…QRTH, and YACP…QRTH. A C2H2-type 4; atypical zinc finger spans residues 411 to 432; that stretch reads YKCEECGEIVHVSSLFRHQRLH. A Glycyl lysine isopeptide (Lys-Gly) (interchain with G-Cter in SUMO2) cross-link involves residue Lys412. 3 consecutive C2H2-type zinc fingers follow at residues 438 to 460, 466 to 488, and 494 to 516; these read YKCG…QRTH, YACV…QRTH, and YKCF…QRIH.

It belongs to the krueppel C2H2-type zinc-finger protein family. As to expression, expressed at high level in testis.

It is found in the nucleus. In terms of biological role, may be involved in transcriptional regulation. This is Zinc finger protein 394 (Znf394) from Mus musculus (Mouse).